Consider the following 239-residue polypeptide: Tetraspanin-9 (239 aa).

Topologically, residues 1-13 are cytoplasmic; sequence MARGCLCCLKYMM. Residues 14 to 34 form a helical membrane-spanning segment; that stretch reads FLFNLIFWLCGCGLLGVGIWL. Over 35–55 the chain is Extracellular; sequence SVSQGNFATFSPSFPSLSAAN. The helical transmembrane segment at 56–76 threads the bilayer; it reads LVIAIGTIVMVTGFLGCLGAI. Topologically, residues 77-85 are cytoplasmic; the sequence is KENKCLLLS. A helical transmembrane segment spans residues 86-106; sequence FFIILLIILLAELILLILFFV. The Extracellular segment spans residues 107 to 203; it reads YMDKVNENAK…VKMWFDDNKH (97 aa). Residue Asn180 is glycosylated (N-linked (GlcNAc...) asparagine). Residues 204 to 224 form a helical membrane-spanning segment; sequence VLGTIGMCILIIQILGMAFSM. The Cytoplasmic segment spans residues 225-239; the sequence is TLFQQIHRTGKKYDA.

The protein belongs to the tetraspanin (TM4SF) family.

The protein resides in the membrane. The chain is Tetraspanin-9 (tspan9) from Xenopus tropicalis (Western clawed frog).